The chain runs to 219 residues: Ribosome maturation factor RimP (219 aa).

2 disordered regions span residues 1–38 (MTQR…LATR) and 189–219 (VEFT…DEER). Acidic residues predominate over residues 198 to 219 (DAFDGTDEAGDFDDDDVEDEER).

It belongs to the RimP family.

It localises to the cytoplasm. Functionally, required for maturation of 30S ribosomal subunits. In Salinispora arenicola (strain CNS-205), this protein is Ribosome maturation factor RimP.